Consider the following 822-residue polypeptide: Cation/H(+) antiporter 3 (822 aa).

Transmembrane regions (helical) follow at residues 55 to 75 (FPHLQMIFLIISFLWQFLHFF), 116 to 136 (EIVFSLTAACSYMMFWFLMGV), 150 to 170 (AITIGLSSVLLSTLVCSVIFF), 190 to 210 (YVVIYSIQCLSSFPVVGNLLF), 224 to 244 (ISSAVISDFSTSILASVLIFM), 274 to 294 (IVVLFVCIAIYVFRPLMFYII), 305 to 325 (AIYLSTIIVMVSGSAILANWC), 331 to 351 (MGPFILGLAVPHGPPLGSAII), 362 to 382 (FLPFFIASSSTEIDISALFGW), 388 to 408 (IILIMVTSFVVKFIFTTVPAL), 418 to 438 (FALSLIMSFKGIFELGAYALA), and 447 to 467 (ETFTVACLYITLNSAIIPPIL).

Belongs to the monovalent cation:proton antiporter 2 (CPA2) transporter (TC 2.A.37) family. CHX (TC 2.A.37.4) subfamily.

The protein resides in the membrane. Functionally, may operate as a cation/H(+) antiporter. This Arabidopsis thaliana (Mouse-ear cress) protein is Cation/H(+) antiporter 3 (CHX3).